The following is a 54-amino-acid chain: UPF0391 membrane protein Pfl01_0044 (54 aa).

Helical transmembrane passes span 4-24 and 29-49; these read WAIT…GGIA and GIAK…FFFG.

It belongs to the UPF0391 family.

The protein localises to the cell membrane. The sequence is that of UPF0391 membrane protein Pfl01_0044 from Pseudomonas fluorescens (strain Pf0-1).